A 398-amino-acid polypeptide reads, in one-letter code: Phosphoglycerate kinase (398 aa).

Substrate contacts are provided by residues 23–25, Arg-38, 61–64, Arg-122, and Arg-155; these read DFN and HLGK. ATP-binding positions include Lys-206, Gly-297, Glu-328, and 354 to 357; that span reads GGDS.

The protein belongs to the phosphoglycerate kinase family. As to quaternary structure, monomer.

The protein resides in the cytoplasm. The enzyme catalyses (2R)-3-phosphoglycerate + ATP = (2R)-3-phospho-glyceroyl phosphate + ADP. The protein operates within carbohydrate degradation; glycolysis; pyruvate from D-glyceraldehyde 3-phosphate: step 2/5. This Clostridium novyi (strain NT) protein is Phosphoglycerate kinase.